Here is a 438-residue protein sequence, read N- to C-terminus: Telomeric repeat-binding factor 1 (438 aa).

Residues 1 to 10 (MAEDVSSTAP) are compositionally biased toward polar residues. Residues 1 to 36 (MAEDVSSTAPSPRGCADGRDADPTEEQMAQTQRNDQ) form a disordered region. The residue at position 2 (Ala2) is an N-acetylalanine. A Phosphoserine modification is found at Ser11. The TRFH dimerization stretch occupies residues 58–268 (EEEEEDSGLV…AAAKVVESKR (211 aa)). Lys213 participates in a covalent cross-link: Glycyl lysine isopeptide (Lys-Gly) (interchain with G-Cter in SUMO2). Ser219 carries the post-translational modification Phosphoserine; by ATM. An interaction with RLIM region spans residues 265 to 378 (ESKRTRTITS…PVTPEKHRAR (114 aa)). Residues 268-311 (RTRTITSQDKPSGNDVEMETEANLDTRKSVSDKQSAVTESSEGT) form a disordered region. Polar residues predominate over residues 299–311 (DKQSAVTESSEGT). Lys325 participates in a covalent cross-link: Glycyl lysine isopeptide (Lys-Gly) (interchain with G-Cter in SUMO2). A disordered region spans residues 326–375 (LQHGTQQQDLNKKERRVGTPQSTKKKKESRRATESRIPVSKSQPVTPEKH). The Nuclear localization signal motif lies at 337–356 (KKERRVGTPQSTKKKKESRR). A Glycyl lysine isopeptide (Lys-Gly) (interchain with G-Cter in SUMO2) cross-link involves residue Lys366. The 58-residue stretch at 375–432 (HRARKRQAWLWEEDKNLRSGVRKYGEGNWSKILLHYKFNNRTSVMLKDRWRTMKKLKL) folds into the HTH myb-type domain. Positions 403 to 428 (WSKILLHYKFNNRTSVMLKDRWRTMK) form a DNA-binding region, H-T-H motif.

In terms of assembly, homodimer; can contain both isoforms. Found in a complex with POT1; TINF2 and TNKS1. Interacts with ATM, TINF2, TNKS1, TNKS2, PINX1, NEK2 and MAPRE1. Component of the shelterin complex (telosome) composed of TERF1, TERF2, TINF2, TERF2IP ACD and POT1. Interacts with RLIM (via N-terminus). Interacts with FBXO4. Interaction with TINF2 protects against interaction with FBXO4 and subsequent polyubiquitination and proteasomal degradation. Interacts with GNL3L; this interaction promotes homodimerization. Interacts with TIN2. Interactions with GNL3L and TIN2 are mutually exclusive. Interacts with RTEL1. Interacts with CCDC79/TERB1. In terms of processing, phosphorylated preferentially on Ser-219 in an ATM-dependent manner in response to ionizing DNA damage. Post-translationally, ADP-ribosylation by TNKS1 or TNKS2 diminishes its ability to bind to telomeric DNA. Ubiquitinated by RLIM/RNF12, leading to its degradation by the proteasome. Ubiquitinated by a SCF (SKP1-CUL1-F-box protein) ubiquitin-protein ligase complex, leading to its degradation by the proteasome.

It localises to the nucleus. It is found in the chromosome. Its subcellular location is the telomere. The protein localises to the cytoplasm. The protein resides in the cytoskeleton. It localises to the spindle. In terms of biological role, binds the telomeric double-stranded 5'-TTAGGG-3' repeat and negatively regulates telomere length. Involved in the regulation of the mitotic spindle. Component of the shelterin complex (telosome) that is involved in the regulation of telomere length and protection. Shelterin associates with arrays of double-stranded 5'-TTAGGG-3' repeats added by telomerase and protects chromosome ends; without its protective activity, telomeres are no longer hidden from the DNA damage surveillance and chromosome ends are inappropriately processed by DNA repair pathways. The protein is Telomeric repeat-binding factor 1 (TERF1) of Cricetulus griseus (Chinese hamster).